We begin with the raw amino-acid sequence, 726 residues long: Probable cyclic nucleotide-gated ion channel 14 (726 aa).

The Cytoplasmic portion of the chain corresponds to 1–86; it reads MEFKRDNTVR…GDAVLQWNRV (86 aa). The chain crosses the membrane as a helical span at residues 87 to 107; that stretch reads FLFWCLVALYVDPLFFFLSSV. The Extracellular portion of the chain corresponds to 108–122; it reads KRIGRSSCMTTDLKL. The helical transmembrane segment at 123-143 threads the bilayer; it reads GIVITFFRTLADLFYVLHIVI. Over 144 to 177 the chain is Cytoplasmic; it reads KFRTAYVSRTSRVFGRGELVKDPKLIARRYLRSD. Residues 178–198 form a helical membrane-spanning segment; the sequence is FIVDLIACLPLPQIVSWFILP. The Extracellular portion of the chain corresponds to 199-211; it reads SIRSSHSDHTTNA. A helical membrane pass occupies residues 212 to 232; that stretch reads LVLIVLVQYIPRLYLIFPLSA. The Cytoplasmic portion of the chain corresponds to 233-252; it reads EIIKATGVVTTTAWAGAAYN. Residues 253–273 form a helical membrane-spanning segment; it reads LLQYMLASHILGSAWYLLSIE. Residues 274-377 are Extracellular-facing; it reads RQATCWKAEC…LSTSTSVLET (104 aa). A helical transmembrane segment spans residues 378–398; sequence MFAILVAIFGLVLFALLIGNM. The Cytoplasmic portion of the chain corresponds to 399–726; it reads QTYLQSITVR…PDEPDFSVDD (328 aa). Residues 481–605 and Glu552 each bind a nucleoside 3',5'-cyclic phosphate; that span reads LFAQ…SKKL. Positions 597 to 612 are calmodulin-binding; that stretch reads FRRLHSKKLQHTFRYY. Residues 617-646 form the IQ domain; sequence RTWAACFVQVAWRRYKRKKLAKSLSLAESF. Positions 707 to 726 are disordered; that stretch reads KDVEIPMLPKPDEPDFSVDD.

It belongs to the cyclic nucleotide-gated cation channel (TC 1.A.1.5) family. In terms of assembly, homotetramer or heterotetramer.

Its subcellular location is the cell membrane. In terms of biological role, probable cyclic nucleotide-gated ion channel. This chain is Probable cyclic nucleotide-gated ion channel 14 (CNGC14), found in Arabidopsis thaliana (Mouse-ear cress).